A 224-amino-acid chain; its full sequence is tRNA (guanine-N(7)-)-methyltransferase (224 aa).

The S-adenosyl-L-methionine site is built by Glu-45, Glu-70, Asp-97, and Asp-119. Asp-119 is a catalytic residue. Residues Lys-123, Asp-155, and 199–202 contribute to the substrate site; that span reads TEYE.

It belongs to the class I-like SAM-binding methyltransferase superfamily. TrmB family.

It carries out the reaction guanosine(46) in tRNA + S-adenosyl-L-methionine = N(7)-methylguanosine(46) in tRNA + S-adenosyl-L-homocysteine. Its pathway is tRNA modification; N(7)-methylguanine-tRNA biosynthesis. In terms of biological role, catalyzes the formation of N(7)-methylguanine at position 46 (m7G46) in tRNA. In Ureaplasma urealyticum serovar 10 (strain ATCC 33699 / Western), this protein is tRNA (guanine-N(7)-)-methyltransferase.